The sequence spans 120 residues: MDYEFLRDITGVVKVRMSMDHEAIGHWFNEEVKDNLALLDEVEQAARTVKGSERSWQRAGHEYTLWLDGEEVMIRANQLEFSGDEIEEGMSYYDEESLSLCGVEDFLQVVAAYREFMQQR.

This sequence belongs to the UPF0231 family.

The sequence is that of UPF0231 protein KPK_4613 from Klebsiella pneumoniae (strain 342).